The following is a 246-amino-acid chain: NAD-dependent protein deacetylase (246 aa).

The Deacetylase sirtuin-type domain occupies 1 to 246 (MKKPDIQQLK…VIEEIVNSNS (246 aa)). 7 residues coordinate NAD(+): Ala-25, Phe-36, Arg-37, Gln-106, Ile-108, Asp-109, and His-124. Phe-36 contacts nicotinamide. Residues Ile-108 and Asp-109 each contribute to the nicotinamide site. The Proton acceptor role is filled by His-124. Residues Cys-132, Cys-135, Cys-152, and Cys-155 each contribute to the Zn(2+) site. Residues Ser-193, Ser-194, Asn-216, and Asp-233 each coordinate NAD(+).

Belongs to the sirtuin family. Class U subfamily. Zn(2+) serves as cofactor.

Its subcellular location is the cytoplasm. It catalyses the reaction N(6)-acetyl-L-lysyl-[protein] + NAD(+) + H2O = 2''-O-acetyl-ADP-D-ribose + nicotinamide + L-lysyl-[protein]. In terms of biological role, NAD-dependent protein deacetylase which modulates the activities of several enzymes which are inactive in their acetylated form. In Staphylococcus epidermidis (strain ATCC 35984 / DSM 28319 / BCRC 17069 / CCUG 31568 / BM 3577 / RP62A), this protein is NAD-dependent protein deacetylase.